The sequence spans 208 residues: Glutathione S-transferase GstB (208 aa).

One can recognise a GST N-terminal domain in the interval 1-83 (MITLWGRNNS…YLAAQYGQKR (83 aa)). Residues Asn-12, Asn-39, Val-53, and 67-68 (ES) each bind glutathione. Positions 88-208 (SPARRAEAEK…VRKVVMIPVS (121 aa)) constitute a GST C-terminal domain.

The protein belongs to the GST superfamily.

It catalyses the reaction RX + glutathione = an S-substituted glutathione + a halide anion + H(+). Conjugation of reduced glutathione to a wide number of exogenous and endogenous hydrophobic electrophiles. The polypeptide is Glutathione S-transferase GstB (gstB) (Escherichia coli O6:H1 (strain CFT073 / ATCC 700928 / UPEC)).